The chain runs to 153 residues: Fucose mutarotase (153 aa).

The Proton donor role is filled by His24. Asp32 is a substrate binding site. Asp69 is a catalytic residue. The substrate site is built by Met79, Tyr120, Tyr138, and Asn140. The active site involves Tyr120.

Belongs to the RbsD / FucU family. In terms of assembly, mainly homodimer, but also exists as homotetramer, homooctamer, and homodecamer. The homodimeric form seems catalytically inactive. In terms of tissue distribution, widely expressed in various tissues and cell lines, including kidney, liver, and pancreas, marginally in muscle and testis.

It catalyses the reaction alpha-L-fucose = beta-L-fucose. Its pathway is carbohydrate metabolism; L-fucose metabolism. Involved in the interconversion between alpha- and beta-L-fucoses. L-Fucose (6-deoxy-L-galactose) exists as alpha-L-fucose (29.5%) and beta-L-fucose (70.5%), the beta-form is metabolized through the salvage pathway. GDP-L-fucose formed either by the de novo or salvage pathways is transported into the endoplasmic reticulum, where it serves as a substrate for N- and O-glycosylations by fucosyltransferases. Fucosylated structures expressed on cell surfaces or secreted in biological fluids are believed to play a critical role in cell-cell adhesion and recognition processes. This Mus musculus (Mouse) protein is Fucose mutarotase (Fuom).